A 698-amino-acid chain; its full sequence is Elongation factor G (698 aa).

Positions 8–284 constitute a tr-type G domain; it reads ANVRNIGIMA…AVVDYLPSPL (277 aa). Residues 17-24, 81-85, and 135-138 contribute to the GTP site; these read AHIDAGKT, DTPGH, and NKLD.

The protein belongs to the TRAFAC class translation factor GTPase superfamily. Classic translation factor GTPase family. EF-G/EF-2 subfamily.

It is found in the cytoplasm. Its function is as follows. Catalyzes the GTP-dependent ribosomal translocation step during translation elongation. During this step, the ribosome changes from the pre-translocational (PRE) to the post-translocational (POST) state as the newly formed A-site-bound peptidyl-tRNA and P-site-bound deacylated tRNA move to the P and E sites, respectively. Catalyzes the coordinated movement of the two tRNA molecules, the mRNA and conformational changes in the ribosome. The chain is Elongation factor G from Salinispora tropica (strain ATCC BAA-916 / DSM 44818 / JCM 13857 / NBRC 105044 / CNB-440).